Consider the following 414-residue polypeptide: Cytochrome P450 CYP105Q4 (414 aa).

Residues 1–12 (MSDTLASPSPET) show a composition bias toward polar residues. The interval 1–21 (MSDTLASPSPETASGIPDYPM) is disordered. Residues histidine 108, glutamine 302, arginine 304, histidine 361, and cysteine 363 each coordinate heme.

This sequence belongs to the cytochrome P450 family. Heme serves as cofactor.

Its function is as follows. Can bind oleic-acid derivatives, amphotericin B like precursors and a variety of nitrogen ligand donors. The sequence is that of Cytochrome P450 CYP105Q4 from Mycobacterium marinum (strain ATCC BAA-535 / M).